The sequence spans 728 residues: Polyribonucleotide nucleotidyltransferase (728 aa).

Aspartate 487 and aspartate 493 together coordinate Mg(2+). A KH domain is found at 554 to 613 (PRIEVITVPTDKIREVIGTGGKVIREIVEKTGAKVDISDDGTIKVASSDGESIRKAIAWI). The region spanning 623 to 691 (GKIYEGTVVK…DRGKVRLSMK (69 aa)) is the S1 motif domain. A compositionally biased stretch (acidic residues) spans 697–707 (TGEEIVYENEP). The disordered stretch occupies residues 697-728 (TGEEIVYENEPAEQPREKREGGGGRGRRRERD). The segment covering 709–718 (EQPREKREGG) has biased composition (basic and acidic residues).

The protein belongs to the polyribonucleotide nucleotidyltransferase family. It depends on Mg(2+) as a cofactor.

The protein resides in the cytoplasm. The enzyme catalyses RNA(n+1) + phosphate = RNA(n) + a ribonucleoside 5'-diphosphate. Involved in mRNA degradation. Catalyzes the phosphorolysis of single-stranded polyribonucleotides processively in the 3'- to 5'-direction. This Parvibaculum lavamentivorans (strain DS-1 / DSM 13023 / NCIMB 13966) protein is Polyribonucleotide nucleotidyltransferase.